The chain runs to 314 residues: Homeobox protein knotted-1-like 3 (314 aa).

Residues 218–238 (ELKIELKQGFKSRIEDVREEI) form the ELK domain. Residues 239 to 302 (LRKRRAGKLP…NQRKRNWHNN (64 aa)) constitute a DNA-binding region (homeobox; TALE-type).

The protein belongs to the TALE/KNOX homeobox family. As to expression, isoform 1 is expressed in roots and flowers, and at lower levels in leaf blades and leaf sheaths. Isoform 2 is expressed in roots and flowers.

The protein localises to the nucleus. This Oryza sativa subsp. japonica (Rice) protein is Homeobox protein knotted-1-like 3 (HOS66).